The following is a 256-amino-acid chain: 2-C-methyl-D-erythritol 4-phosphate cytidylyltransferase (256 aa).

It belongs to the IspD/TarI cytidylyltransferase family. IspD subfamily.

It carries out the reaction 2-C-methyl-D-erythritol 4-phosphate + CTP + H(+) = 4-CDP-2-C-methyl-D-erythritol + diphosphate. It functions in the pathway isoprenoid biosynthesis; isopentenyl diphosphate biosynthesis via DXP pathway; isopentenyl diphosphate from 1-deoxy-D-xylulose 5-phosphate: step 2/6. Catalyzes the formation of 4-diphosphocytidyl-2-C-methyl-D-erythritol from CTP and 2-C-methyl-D-erythritol 4-phosphate (MEP). This is 2-C-methyl-D-erythritol 4-phosphate cytidylyltransferase from Corynebacterium glutamicum (strain R).